The sequence spans 1401 residues: MAP kinase kinase kinase wis4 (1401 aa).

2 disordered regions span residues 67 to 99 (HIPL…MSYT) and 176 to 205 (QDSI…NDFS). Composition is skewed to polar residues over residues 72–99 (PSHS…MSYT) and 176–191 (QDSI…NQSL). Residues 1037 to 1306 (WQQGHFVRSG…AVDLLTHPWI (270 aa)) enclose the Protein kinase domain. Residues 1043–1051 (VRSGMFGDV) and Lys1066 each bind ATP. The active-site Proton acceptor is the Asp1161.

Belongs to the protein kinase superfamily. STE Ser/Thr protein kinase family. MAP kinase kinase kinase subfamily.

It carries out the reaction L-seryl-[protein] + ATP = O-phospho-L-seryl-[protein] + ADP + H(+). The catalysed reaction is L-threonyl-[protein] + ATP = O-phospho-L-threonyl-[protein] + ADP + H(+). Involved in a signal transduction pathway that is activated in under conditions of heat shock, oxidative stress or limited nutrition. Unlike win1, it is not activated by changes in the osmolarity of the extracellular environment. Activates the wis1 MAP kinase kinase by phosphorylation. This is MAP kinase kinase kinase wis4 (wis4) from Schizosaccharomyces pombe (strain 972 / ATCC 24843) (Fission yeast).